The primary structure comprises 500 residues: ACT domain-containing protein ACR2 (500 aa).

4 ACT domains span residues 39-121 (VVKV…EANN), 136-213 (AIEM…ADPA), 298-373 (IVTV…RVCE), and 376-459 (KLEL…TVGS). The segment at 450–478 (EDTKIDTVGSDEPTASASATPQRQPQPHR) is disordered. Positions 462–474 (PTASASATPQRQP) are enriched in polar residues.

In terms of biological role, may bind amino acids. The polypeptide is ACT domain-containing protein ACR2 (Arabidopsis thaliana (Mouse-ear cress)).